Reading from the N-terminus, the 612-residue chain is Rhotekin-2 (612 aa).

In terms of domain architecture, REM-1 spans 3 to 79 (IKRKKIRESA…LRSQMGESNT (77 aa)). Residues 285–392 (DEAMMGFLNQ…WMEAFWQHFY (108 aa)) form the PH domain. 2 disordered regions span residues 483-530 (RNKP…SDKE) and 574-612 (ENKA…QSQV). Low complexity predominate over residues 486–498 (PPLLSSDDPSTSS).

In Xenopus laevis (African clawed frog), this protein is Rhotekin-2 (rtkn2).